Reading from the N-terminus, the 163-residue chain is Globin CTT-Z (163 aa).

Residues 1–16 form the signal peptide; sequence MKFFAVLALCIVGAIA. In terms of domain architecture, Globin spans 18–162; it reads PLTSDEAALV…VYTAVFQIVT (145 aa). Heme b contacts are provided by His76 and His111.

The protein belongs to the globin family.

This chain is Globin CTT-Z (CTT-Z), found in Chironomus thummi piger (Midge).